We begin with the raw amino-acid sequence, 215 residues long: MHTVKLLCVVFSCLCAVAWASSNRQPCHSPPLTSGTMKVVSTGGHDLASGEFSYDSKANKFRFVEDTAHANKTSHMDVLVHFEEGVLYEIDSKNESCKKETLQFRKHLMEIPPDATHESEIYMGSPSITEQGLRVRVWNGKLPELHAHYSLSTTSCGCLPVSGSYYGDKKDLLFSFFGVETEVDDPQVFVPPAYCEAVAFEEAPDDHSFFDLFHD.

An N-terminal signal peptide occupies residues 1-20 (MHTVKLLCVVFSCLCAVAWA). N71 and N94 each carry an N-linked (GlcNAc...) asparagine glycan.

The protein belongs to the ependymin family. Forms disulfide-linked dimers. Post-translationally, binds calcium through the terminal sialic acids. As to expression, EPDs are synthesized in the meninx and secreted in the cerebrospinal fluid.

The protein resides in the secreted. May play a role in neural plasticity. May be involved during axon regeneration. The sequence is that of Ependymin (epd) from Cyprinus carpio (Common carp).